The following is a 278-amino-acid chain: NAD-capped RNA hydrolase NudC (278 aa).

R84 lines the substrate pocket. C114 and C117 together coordinate Zn(2+). A substrate-binding site is contributed by E127. Residue C132 coordinates Zn(2+). Y140 is a binding site for substrate. The region spanning P141–Y264 is the Nudix hydrolase domain. A174, E190, and E194 together coordinate a divalent metal cation. Residues G175–Q196 carry the Nudix box motif. Residue Q208–S215 participates in substrate binding. Residue E235 coordinates a divalent metal cation. A257 serves as a coordination point for substrate.

Belongs to the Nudix hydrolase family. NudC subfamily. In terms of assembly, homodimer. It depends on Mg(2+) as a cofactor. Mn(2+) serves as cofactor. Zn(2+) is required as a cofactor.

It carries out the reaction a 5'-end NAD(+)-phospho-ribonucleoside in mRNA + H2O = a 5'-end phospho-adenosine-phospho-ribonucleoside in mRNA + beta-nicotinamide D-ribonucleotide + 2 H(+). It catalyses the reaction NAD(+) + H2O = beta-nicotinamide D-ribonucleotide + AMP + 2 H(+). The catalysed reaction is NADH + H2O = reduced beta-nicotinamide D-ribonucleotide + AMP + 2 H(+). MRNA decapping enzyme that specifically removes the nicotinamide adenine dinucleotide (NAD) cap from a subset of mRNAs by hydrolyzing the diphosphate linkage to produce nicotinamide mononucleotide (NMN) and 5' monophosphate mRNA. The NAD-cap is present at the 5'-end of some mRNAs and stabilizes RNA against 5'-processing. Has preference for mRNAs with a 5'-end purine. Catalyzes the hydrolysis of a broad range of dinucleotide pyrophosphates. The chain is NAD-capped RNA hydrolase NudC from Pseudomonas syringae pv. tomato (strain ATCC BAA-871 / DC3000).